We begin with the raw amino-acid sequence, 495 residues long: Probable cytochrome P450 513C1 (495 aa).

The chain crosses the membrane as a helical span at residues 1-21 (MNYLVLILVSLVSIYFLFIKN). Cys441 is a heme binding site.

The protein belongs to the cytochrome P450 family. Heme is required as a cofactor.

The protein localises to the membrane. The chain is Probable cytochrome P450 513C1 (cyp513C1) from Dictyostelium discoideum (Social amoeba).